Reading from the N-terminus, the 236-residue chain is Small ribosomal subunit protein uS2c (236 aa).

The protein belongs to the universal ribosomal protein uS2 family.

It is found in the plastid. The protein localises to the chloroplast. This is Small ribosomal subunit protein uS2c (rps2) from Eucalyptus globulus subsp. globulus (Tasmanian blue gum).